Here is a 327-residue protein sequence, read N- to C-terminus: Methionyl-tRNA formyltransferase (327 aa).

Residue 118–121 (SLLP) participates in (6S)-5,6,7,8-tetrahydrofolate binding.

It belongs to the Fmt family.

The catalysed reaction is L-methionyl-tRNA(fMet) + (6R)-10-formyltetrahydrofolate = N-formyl-L-methionyl-tRNA(fMet) + (6S)-5,6,7,8-tetrahydrofolate + H(+). Attaches a formyl group to the free amino group of methionyl-tRNA(fMet). The formyl group appears to play a dual role in the initiator identity of N-formylmethionyl-tRNA by promoting its recognition by IF2 and preventing the misappropriation of this tRNA by the elongation apparatus. The protein is Methionyl-tRNA formyltransferase of Corynebacterium jeikeium (strain K411).